A 220-amino-acid polypeptide reads, in one-letter code: Large ribosomal subunit protein uL1 (220 aa).

It belongs to the universal ribosomal protein uL1 family. In terms of assembly, part of the 50S ribosomal subunit.

Functionally, binds directly to 23S rRNA. The L1 stalk is quite mobile in the ribosome, and is involved in E site tRNA release. In terms of biological role, protein L1 is also a translational repressor protein, it controls the translation of the L11 operon by binding to its mRNA. The protein is Large ribosomal subunit protein uL1 of Ehrlichia canis (strain Jake).